Consider the following 380-residue polypeptide: Erythronate-4-phosphate dehydrogenase (380 aa).

Residues serine 45 and threonine 66 each contribute to the substrate site. Residues 126–127, aspartate 146, threonine 174, 205–207, and aspartate 231 each bind NAD(+); these read QV and ASR. Arginine 207 is a catalytic residue. The active site involves glutamate 236. Histidine 253 functions as the Proton donor in the catalytic mechanism. Glycine 256 is a binding site for NAD(+). Residue tyrosine 257 coordinates substrate.

The protein belongs to the D-isomer specific 2-hydroxyacid dehydrogenase family. PdxB subfamily. In terms of assembly, homodimer.

It localises to the cytoplasm. The enzyme catalyses 4-phospho-D-erythronate + NAD(+) = (R)-3-hydroxy-2-oxo-4-phosphooxybutanoate + NADH + H(+). The protein operates within cofactor biosynthesis; pyridoxine 5'-phosphate biosynthesis; pyridoxine 5'-phosphate from D-erythrose 4-phosphate: step 2/5. Catalyzes the oxidation of erythronate-4-phosphate to 3-hydroxy-2-oxo-4-phosphonooxybutanoate. This Pseudomonas syringae pv. syringae (strain B728a) protein is Erythronate-4-phosphate dehydrogenase.